Here is a 408-residue protein sequence, read N- to C-terminus: MVPPPLPSRGGAAKRQLGKSLGPLLLLLALGHTWTYREEPEDRDREVCSENKITTTKYPCLKSSGELTTCFRKKCCKGYKFVLGQCIPEDYDICAQAPCEQQCTDNFGRVLCTCYPGYRYDRERHQKRERPYCLDIDECATSNTTLCAHICINTMGSYHCECREGYILEDDGRTCTRGDKYPNDTGHEEKSENEVKAGTCCATCKEFSQMKQTVLQLKQKMALLPNNAAELGKYVNGDKVLASNAYLPGPPGLPGGQGPPGSPGPKGSPGFPGMPGPPGQPGPRGSMGPMGPSPDLSHIKQGRRGPVGPPGAPGRHGSKGERGAPGPPGSPGPPGSFDFLLLVLADIRNDIAELQEKVFGHRTHSSAEDFPLPQEFSSYPETLDFGSGDDYSRRTEARDPEAPRNFYP.

The signal sequence occupies residues 1 to 35; the sequence is MVPPPLPSRGGAAKRQLGKSLGPLLLLLALGHTWT. Residues 135 to 176 enclose the EGF-like; calcium-binding domain; the sequence is DIDECATSNTTLCAHICINTMGSYHCECREGYILEDDGRTCT. Intrachain disulfides connect Cys139-Cys151, Cys147-Cys160, and Cys162-Cys175. A glycan (N-linked (GlcNAc...) asparagine) is linked at Asn143. Residue Asn183 is glycosylated (N-linked (GlcNAc...) asparagine). Disordered stretches follow at residues 246-335 and 361-408; these read YLPG…GPPG and HRTH…NFYP. 2 consecutive Collagen-like domains span residues 247 to 292 and 302 to 335; these read LPGP…PMGP and GRRGPVGPPGAPGRHGSKGERGAPGPPGSPGPPG. Residues 272–281 are compositionally biased toward pro residues; it reads PGMPGPPGQP. The segment covering 283 to 294 has biased composition (low complexity); that stretch reads PRGSMGPMGPSP. A compositionally biased stretch (pro residues) spans 325-334; sequence PGPPGSPGPP. Ser387 is a glycosylation site (O-linked (Xyl...) (chondroitin sulfate) serine). Positions 390–402 are enriched in basic and acidic residues; the sequence is DYSRRTEARDPEA.

The protein belongs to the CCBE1 family.

Its subcellular location is the secreted. In terms of biological role, required for lymphangioblast budding and angiogenic sprouting from venous endothelium during embryogenesis. The polypeptide is Collagen and calcium-binding EGF domain-containing protein 1 (Ccbe1) (Mus musculus (Mouse)).